Here is a 558-residue protein sequence, read N- to C-terminus: Peptidyl-prolyl isomerase cwc27 (558 aa).

The region spanning 11–184 is the PPIase cyclophilin-type domain; the sequence is PTASATLHTT…YPVKITSCEV (174 aa). Disordered regions lie at residues 201–388, 408–443, and 510–558; these read ATGP…TGFS, ESSD…DEES, and MVID…WSKR. 2 stretches are compositionally biased toward pro residues: residues 276–290 and 304–319; these read SPSP…APPK and LPNP…PPPK. Positions 374–388 are enriched in polar residues; sequence VSASTSAPNGITGFS. Basic and acidic residues-rich tracts occupy residues 513–523 and 535–558; these read DPREKEKELAD and RGLE…WSKR.

This sequence belongs to the cyclophilin-type PPIase family. CWC27 subfamily. As to quaternary structure, associated with the spliceosome.

The protein resides in the cytoplasm. Its subcellular location is the nucleus. The enzyme catalyses [protein]-peptidylproline (omega=180) = [protein]-peptidylproline (omega=0). Its function is as follows. PPIases accelerate the folding of proteins. It catalyzes the cis-trans isomerization of proline imidic peptide bonds in oligopeptides. Involved in pre-mRNA splicing. In Emericella nidulans (strain FGSC A4 / ATCC 38163 / CBS 112.46 / NRRL 194 / M139) (Aspergillus nidulans), this protein is Peptidyl-prolyl isomerase cwc27 (cwc27).